The following is a 97-amino-acid chain: Protein RnfH (97 aa).

It belongs to the UPF0125 (RnfH) family.

In Paramagnetospirillum magneticum (strain ATCC 700264 / AMB-1) (Magnetospirillum magneticum), this protein is Protein RnfH.